The sequence spans 269 residues: Shikimate dehydrogenase (NADP(+)) (269 aa).

Shikimate is bound by residues 14–16 and Thr-61; that span reads SVS. Lys-65 functions as the Proton acceptor in the catalytic mechanism. 2 residues coordinate shikimate: Asn-85 and Asp-98. Residues 120-124, 143-148, and Thr-211 contribute to the NADP(+) site; these read GAGGA and NRTEEK. Tyr-213 contacts shikimate. An NADP(+)-binding site is contributed by Gly-234.

Belongs to the shikimate dehydrogenase family. As to quaternary structure, homodimer.

It catalyses the reaction shikimate + NADP(+) = 3-dehydroshikimate + NADPH + H(+). It participates in metabolic intermediate biosynthesis; chorismate biosynthesis; chorismate from D-erythrose 4-phosphate and phosphoenolpyruvate: step 4/7. Its function is as follows. Involved in the biosynthesis of the chorismate, which leads to the biosynthesis of aromatic amino acids. Catalyzes the reversible NADPH linked reduction of 3-dehydroshikimate (DHSA) to yield shikimate (SA). This is Shikimate dehydrogenase (NADP(+)) from Archaeoglobus fulgidus (strain ATCC 49558 / DSM 4304 / JCM 9628 / NBRC 100126 / VC-16).